Here is a 68-residue protein sequence, read N- to C-terminus: Alpha-conotoxin-like Lt1.2 (68 aa).

The signal sequence occupies residues 1–21 (MGMRMMFIMFMLVVLATTVDT). Residues 22-48 (FTSDRALDAMNAAASNKASRLIALAVR) constitute a propeptide that is removed on maturation. Cystine bridges form between C50–C56 and C51–C64. The interval 52–54 (ARA) is lacks the Ser-Xaa-Pro motif that is crucial for potent interaction with nAChR. G65 is subject to Glycine amide.

Belongs to the conotoxin A superfamily. As to expression, expressed by the venom duct.

It is found in the secreted. Its function is as follows. Alpha-conotoxins act on postsynaptic membranes, they bind to the nicotinic acetylcholine receptors (nAChR) and thus inhibit them. Has a distinct nAChR binding mode from other alpha-conotoxins, due to a different three residue motif (Ala-Xaa-Ala instead of the conserved Ser-Xaa-Pro motif). This is Alpha-conotoxin-like Lt1.2 from Conus litteratus (Lettered cone).